The sequence spans 107 residues: Nucleoid-associated protein BT_0257 (107 aa).

Belongs to the YbaB/EbfC family. In terms of assembly, homodimer.

The protein resides in the cytoplasm. Its subcellular location is the nucleoid. Functionally, binds to DNA and alters its conformation. May be involved in regulation of gene expression, nucleoid organization and DNA protection. In Bartonella tribocorum (strain CIP 105476 / IBS 506), this protein is Nucleoid-associated protein BT_0257.